The following is a 128-amino-acid chain: Large ribosomal subunit protein bL12 (128 aa).

It belongs to the bacterial ribosomal protein bL12 family. As to quaternary structure, homodimer. Part of the ribosomal stalk of the 50S ribosomal subunit. Forms a multimeric L10(L12)X complex, where L10 forms an elongated spine to which 2 to 4 L12 dimers bind in a sequential fashion. Binds GTP-bound translation factors.

Forms part of the ribosomal stalk which helps the ribosome interact with GTP-bound translation factors. Is thus essential for accurate translation. This is Large ribosomal subunit protein bL12 from Corynebacterium jeikeium (strain K411).